Consider the following 157-residue polypeptide: 2-C-methyl-D-erythritol 2,4-cyclodiphosphate synthase (157 aa).

A divalent metal cation is bound by residues D8 and H10. 4-CDP-2-C-methyl-D-erythritol 2-phosphate contacts are provided by residues 8–10 and 34–35; these read DVH and HS. Residue H42 coordinates a divalent metal cation. 4-CDP-2-C-methyl-D-erythritol 2-phosphate is bound by residues 56-58, 132-135, and R142; these read DIG and TTNE.

This sequence belongs to the IspF family. As to quaternary structure, homotrimer. A divalent metal cation is required as a cofactor.

The catalysed reaction is 4-CDP-2-C-methyl-D-erythritol 2-phosphate = 2-C-methyl-D-erythritol 2,4-cyclic diphosphate + CMP. The protein operates within isoprenoid biosynthesis; isopentenyl diphosphate biosynthesis via DXP pathway; isopentenyl diphosphate from 1-deoxy-D-xylulose 5-phosphate: step 4/6. In terms of biological role, involved in the biosynthesis of isopentenyl diphosphate (IPP) and dimethylallyl diphosphate (DMAPP), two major building blocks of isoprenoid compounds. Catalyzes the conversion of 4-diphosphocytidyl-2-C-methyl-D-erythritol 2-phosphate (CDP-ME2P) to 2-C-methyl-D-erythritol 2,4-cyclodiphosphate (ME-CPP) with a corresponding release of cytidine 5-monophosphate (CMP). In Chlorobium phaeovibrioides (strain DSM 265 / 1930) (Prosthecochloris vibrioformis (strain DSM 265)), this protein is 2-C-methyl-D-erythritol 2,4-cyclodiphosphate synthase.